Reading from the N-terminus, the 35-residue chain is Small toxic polypeptide LdrB (35 aa).

The chain crosses the membrane as a helical span at residues Phe10–Trp30.

The protein belongs to the Ldr toxic peptide family.

The protein resides in the cell inner membrane. Its function is as follows. Toxic component of a type I toxin-antitoxin (TA) system. Overexpression causes rapid cell killing, probably by disrupting the cell inner membrane and disruption of ATP synthesis. In Escherichia coli (strain K12), this protein is Small toxic polypeptide LdrB (ldrB).